A 272-amino-acid polypeptide reads, in one-letter code: uncharacterized protein (272 aa).

Lys185 functions as the Schiff-base intermediate with substrate in the catalytic mechanism.

The protein belongs to the DeoC/FbaB aldolase family.

This is an uncharacterized protein from Saccharolobus solfataricus (strain ATCC 35092 / DSM 1617 / JCM 11322 / P2) (Sulfolobus solfataricus).